The primary structure comprises 331 residues: Lipoyl synthase (331 aa).

Residues methionine 1 to alanine 33 form a disordered region. Polar residues predominate over residues alanine 7–alanine 17. Basic and acidic residues predominate over residues aspartate 21–alanine 33. Residues cysteine 78, cysteine 83, cysteine 89, cysteine 104, cysteine 108, cysteine 111, and serine 318 each contribute to the [4Fe-4S] cluster site. The 219-residue stretch at cysteine 89–threonine 307 folds into the Radical SAM core domain.

It belongs to the radical SAM superfamily. Lipoyl synthase family. [4Fe-4S] cluster is required as a cofactor.

It localises to the cytoplasm. It catalyses the reaction [[Fe-S] cluster scaffold protein carrying a second [4Fe-4S](2+) cluster] + N(6)-octanoyl-L-lysyl-[protein] + 2 oxidized [2Fe-2S]-[ferredoxin] + 2 S-adenosyl-L-methionine + 4 H(+) = [[Fe-S] cluster scaffold protein] + N(6)-[(R)-dihydrolipoyl]-L-lysyl-[protein] + 4 Fe(3+) + 2 hydrogen sulfide + 2 5'-deoxyadenosine + 2 L-methionine + 2 reduced [2Fe-2S]-[ferredoxin]. Its pathway is protein modification; protein lipoylation via endogenous pathway; protein N(6)-(lipoyl)lysine from octanoyl-[acyl-carrier-protein]: step 2/2. In terms of biological role, catalyzes the radical-mediated insertion of two sulfur atoms into the C-6 and C-8 positions of the octanoyl moiety bound to the lipoyl domains of lipoate-dependent enzymes, thereby converting the octanoylated domains into lipoylated derivatives. In Cupriavidus necator (strain ATCC 17699 / DSM 428 / KCTC 22496 / NCIMB 10442 / H16 / Stanier 337) (Ralstonia eutropha), this protein is Lipoyl synthase.